A 186-amino-acid polypeptide reads, in one-letter code: Large ribosomal subunit protein uL6 (186 aa).

Belongs to the universal ribosomal protein uL6 family. Part of the 50S ribosomal subunit.

In terms of biological role, this protein binds to the 23S rRNA, and is important in its secondary structure. It is located near the subunit interface in the base of the L7/L12 stalk, and near the tRNA binding site of the peptidyltransferase center. The chain is Large ribosomal subunit protein uL6 from Sulfurisphaera tokodaii (strain DSM 16993 / JCM 10545 / NBRC 100140 / 7) (Sulfolobus tokodaii).